The following is a 230-amino-acid chain: NAD(P)H-hydrate epimerase (230 aa).

One can recognise a YjeF N-terminal domain in the interval Ala-11–Leu-218. Asn-61 to Asp-65 is a binding site for (6S)-NADPHX. Residues Asn-62 and Asp-126 each coordinate K(+). Residues Gly-130 to Pro-136 and Asp-159 contribute to the (6S)-NADPHX site. Residue Ser-162 coordinates K(+).

Belongs to the NnrE/AIBP family. It depends on K(+) as a cofactor.

It carries out the reaction (6R)-NADHX = (6S)-NADHX. The enzyme catalyses (6R)-NADPHX = (6S)-NADPHX. Its function is as follows. Catalyzes the epimerization of the S- and R-forms of NAD(P)HX, a damaged form of NAD(P)H that is a result of enzymatic or heat-dependent hydration. This is a prerequisite for the S-specific NAD(P)H-hydrate dehydratase to allow the repair of both epimers of NAD(P)HX. This chain is NAD(P)H-hydrate epimerase, found in Drosophila erecta (Fruit fly).